A 699-amino-acid polypeptide reads, in one-letter code: (E2-independent) E3 ubiquitin-conjugating enzyme FATS (699 aa).

The interval 48 to 116 (MISSIVISQM…LGIPAPSDER (69 aa)) is required for interaction with p53/TP53. Disordered stretches follow at residues 107-134 (LGIP…GGPR), 443-473 (KPTR…ERRH), and 528-569 (KSED…PARS). 2 stretches are compositionally biased toward basic and acidic residues: residues 113–129 (SDER…EERP) and 460–473 (CLSR…ERRH). A required for interaction with HDAC1 region spans residues 116–224 (RGPEAELPPK…GLCERRKYWV (109 aa)). A compositionally biased stretch (pro residues) spans 534–545 (TPEPSPAAPSPA). Residues 571-699 (TLQEALEVRK…LDQLLQRNAV (129 aa)) form an ALMS motif region.

Interacts with HDAC1; the interaction prevents binding of HDAC1 to CDKN1A/p21 and facilitates the acetylation and stabilization of CDKN1A/p21. Interacts with p53/TP53; the interaction inhibits binding of p53/TP53 and MDM2.

It localises to the cytoplasm. The protein localises to the cytoskeleton. The protein resides in the microtubule organizing center. It is found in the centrosome. In terms of biological role, tumor suppressor that is required to sustain G2/M checkpoint after DNA damage. Acts as a p53/TP53 activator by inhibiting MDM2 binding to p53/TP53 and stimulating non-proteolytic polyubiquitination of p53/TP53. Exhibits ubiquitin ligase (E3) activity and assemble ubiquitin polymers through 'Lys-11'- (K11-), 'Lys-29'- (K29-) and 'Lys-63'- (K63)-linkages, independently of the ubiquitin-conjugating enzyme (E2). Promotes p53/TP53-dependent transcription of CDKN1A/p21, leading to robust checkpoint response. Mediates CDKN1A/p21 protein stability in a ubiquitin-independent manner. Interacts with HDAC1 and prevents binding of HDAC1 to CDKN1A/p21 and facilitates the acetylation and stabilization of CDKN1A/p21. May have a role in the assembly of primary cilia. This Homo sapiens (Human) protein is (E2-independent) E3 ubiquitin-conjugating enzyme FATS.